The primary structure comprises 958 residues: Voltage-gated inwardly rectifying potassium channel KCNH6 (958 aa).

Topologically, residues 1–261 (MPVRRGHVAP…YSPFKAVWDW (261 aa)) are cytoplasmic. Positions 41 to 70 (IIYCNDGFCELFGYSRVEVMQQPCTCDFLT) constitute a PAS domain. The PAC domain occupies 92 to 144 (CKVDILYYRKDASSFRCLVDVVPVKNEDGAVIMFILNFEDLAQLLAKCSSRSL). A helical membrane pass occupies residues 262–282 (LILLLVIYTAVFTPYSAAFLL). The Extracellular segment spans residues 283–298 (SDQDESRRGACSYTCS). A helical membrane pass occupies residues 299–319 (PLTVVDLIVDIMFVVDIVINF). Topologically, residues 320 to 340 (RTTYVNTNDEVVSHPRRIAVH) are cytoplasmic. The chain crosses the membrane as a helical span at residues 341–361 (YFKGWFLIDMVAAIPFDLLIF). Residues 362-370 (RTGSDETTT) lie on the Extracellular side of the membrane. The chain crosses the membrane as a helical; Voltage-sensor span at residues 371-391 (LIGLLKTARLLRLVRVARKLD). The Cytoplasmic segment spans residues 392-398 (RYSEYGA). Residues 399 to 419 (AVLFLLMCTFALIAHWLACIW) traverse the membrane as a helical segment. Over 420–463 (YAIGNVERPYLEHKIGWLDSLGVQLGKRYNGSDPASGPSVQDKY) the chain is Extracellular. The N-linked (GlcNAc...) (complex) asparagine glycan is linked to Asn449. An intramembrane region (pore-forming) is located at residues 464–484 (VTALYFTFSSLTSVGFGNVSP). The Selectivity filter signature appears at 476–481 (SVGFGN). The Extracellular segment spans residues 485–490 (NTNSEK). The chain crosses the membrane as a helical span at residues 491–511 (VFSICVMLIGSLMYASIFGNV). Topologically, residues 512–958 (SAIIQRLYSG…DPGFAGSWGH (447 aa)) are cytoplasmic. Residues 594 to 694 (AFSGAGKGCL…IQRADLLEVL (101 aa)) form a cNMP-binding domain region. 2 disordered regions span residues 720-751 (GLHS…PPLS) and 845-910 (TTSP…PPLA). Over residues 724-745 (SPRQAPGSQDHQGFFLSDNQSD) the composition is skewed to polar residues.

This sequence belongs to the potassium channel family. H (Eag) (TC 1.A.1.20) subfamily. Kv11.2/KCNH6 sub-subfamily. In terms of assembly, the potassium channel is probably composed of a homo- or heterotetrameric complex of pore-forming alpha subunits that can associate only within their subfamily. In terms of tissue distribution, expressed in prolactin-secreting adenomas.

The protein resides in the cell membrane. It carries out the reaction K(+)(in) = K(+)(out). Functionally, pore-forming (alpha) subunit of voltage-gated inwardly rectifying potassium channel. Characterized by unusual gating kinetics by producing relatively small outward currents during membrane depolarization and large inward currents during subsequent repolarization which reflect a rapid inactivation during depolarization and quick recovery from inactivation but slow deactivation (closing) during repolarization. Activates even more slowly than KCNH2. In Homo sapiens (Human), this protein is Voltage-gated inwardly rectifying potassium channel KCNH6.